Consider the following 71-residue polypeptide: Bowman-Birk type trypsin inhibitor (71 aa).

6 cysteine pairs are disulfide-bonded: Cys10-Cys67, Cys11-Cys27, Cys14-Cys63, Cys17-Cys25, Cys35-Cys42, and Cys39-Cys55.

This sequence belongs to the Bowman-Birk serine protease inhibitor family.

Inhibits trypsin but not chymotrypsin. This Triticum aestivum (Wheat) protein is Bowman-Birk type trypsin inhibitor.